A 109-amino-acid polypeptide reads, in one-letter code: Protein E7 (109 aa).

The E7 terminal domain stretch occupies residues 1 to 41 (MRGPKPTLQEIVLDLCPYNEIQPVDLVCHEQLGESEDEIDE). The short motif at 26-30 (LVCHE) is the LXCXE motif; interaction with host RB1 and TMEM173/STING element. A zinc finger lies at 68–104 (CCKCNNTLQLVVEASRDTLRQLQQLFMDSLGFVCPWC). The Nuclear export signal motif lies at 86-94 (LRQLQQLFM).

It belongs to the papillomaviridae E7 protein family. In terms of assembly, homodimer. Homooligomer. Interacts with host RB1; this interaction induces dissociation of RB1-E2F1 complex thereby disrupting RB1 activity. Interacts with host EP300; this interaction represses EP300 transcriptional activity. Interacts with protein E2; this interaction inhibits E7 oncogenic activity. Interacts with host TMEM173/STING; this interaction impairs the ability of TMEM173/STING to sense cytosolic DNA and promote the production of type I interferon (IFN-alpha and IFN-beta). In terms of processing, highly phosphorylated.

Its subcellular location is the host cytoplasm. It localises to the host nucleus. Functionally, plays a role in viral genome replication by driving entry of quiescent cells into the cell cycle. Stimulation of progression from G1 to S phase allows the virus to efficiently use the cellular DNA replicating machinery to achieve viral genome replication. E7 protein has both transforming and trans-activating activities. Induces the disassembly of the E2F1 transcription factor from RB1, with subsequent transcriptional activation of E2F1-regulated S-phase genes. Interferes with host histone deacetylation mediated by HDAC1 and HDAC2, leading to transcription activation. Also plays a role in the inhibition of both antiviral and antiproliferative functions of host interferon alpha. Interaction with host TMEM173/STING impairs the ability of TMEM173/STING to sense cytosolic DNA and promote the production of type I interferon (IFN-alpha and IFN-beta). The polypeptide is Protein E7 (Human papillomavirus 39).